The following is a 745-amino-acid chain: AP-3 complex subunit beta (745 aa).

Serine 638 is subject to Phosphoserine. The disordered stretch occupies residues 674-745 (YASETSESSE…TEPEPNYWQS (72 aa)). Acidic residues predominate over residues 680–718 (ESSEGEYETSTSESEDEETDDTSQEEDNEKNSTPDEDTE).

The protein belongs to the adaptor complexes large subunit family. Adaptor protein complex 3 (AP-3) is a heterotetramer composed of 2 large adaptins (apl5 and apl6), a medium adaptin (apm3) and a small adaptin (aps3).

The protein resides in the golgi apparatus. It is found in the cytoplasmic vesicle. The protein localises to the clathrin-coated vesicle membrane. In terms of biological role, adaptins are components of the adaptor complexes which link clathrin to receptors in coated vesicles. Clathrin-associated protein complexes are believed to interact with the cytoplasmic tails of membrane proteins, leading to their selection and concentration. Beta adaptin is a subunit of the plasma membrane adaptor. The sequence is that of AP-3 complex subunit beta (apl6) from Schizosaccharomyces pombe (strain 972 / ATCC 24843) (Fission yeast).